The following is a 1235-amino-acid chain: MFSGGGGPLSPGGKSAARAASGFFVPAGPRGAGRGPPPCLRQNFYNPYLAPVGTQQKPTGPTQRHTYYSECDEFRFIAPRVLDEDAPPEKRAGVHDGHLKRAPKVYCGGDERDVLRVGSGGFWPRRSRLWGGVDHAPAGFNPTVTVFHVYDILENVEHAYGMRAAQFHARFMDAITPTGTVITLLGLTPEGHRVAVHVYGTRQYFYMNKEEVDRHLQCRAPRDLCERMAAALRESPGASFRGISADHFEAEVVERTDVYYYETRPALFYRVYVRSGRVLSYLCDNFCPAIKKYEGGVDATTRFILDNPGFVTFGWYRLKPGRNNTLAQPRVPMAFGTSSDVEFNCTADNLAIEGGMSDLPAYKLMCFDIECKAGGEDELAFPVAGHPEDLVIQISCLLYDLSTTALEHVLLFSLGSCDLPESHLTELAARGLPTPVVLEFDSEFEMLLAFMTLVKQYGPEFVTGYNIINFDWPFLLAKLTDIYKVPLDGYGRMNGRGVFRVWDIGQSHFQKRSKIKVNGMVNIDMYGIITDKIKLSSYKLNAVAEAVLKDKKKDLSYRDIPAYYAAGPAQRGVIGEYCIQDSLLVGQLFFKFLPHLELSAVARLAGINITRTIYDGQQIRVFTCLLRLADQKGFILPDTQGRFRGAGGEAPKRPAAAREDEERPEEEGEDEDEREEGGGEREPEGARETAGRHVGYQGARVLDPTSGFHVNPVVVFDFASLYPSIIQAHNLCFSTLSLRADAVAHLEAGKDYLEIEVGGRRLFFVKAHVRESLLSILLRDWLAMRKQIRSRIPQSSPEEAVLLDKQQAAIKVVCNSVYGFTGVQHGLLPCLHVAATVTTIGREMLLATREYVHARWAAFEQLLADFPEAADMRAPGPYSMRIIYGDTDSIFVLCRGLTAAGLTAVGDKMASHISRALFLPPIKLECEKTFTKLLLIAKKKYIGVIYGGKMLIKGVDLVRKNNCAFINRTSRALVDLLFYDDTVSGAAAALAERPAEEWLARPLPEGLQAFGAVLVDAHRRITDPERDIQDFVLTAELSRHPRAYTNKRLAHLTVYYKLMARRAQVPSIKDRIPYVIVAQTREVEETVARLAALRELDATAPGDEPAPPAALPCPAKRPRETPSHADPPGGASKPRKLLVSELAEDPAYAIAHGVALNTDYYFSHLLGVACVTFKALFGNNAKITESLLKRFIPEVWHPPDDVAARLRAAGFGAVGAGATAEETRRMLHRAFDTLA.

2 disordered regions span residues 640–692 (QGRF…TAGR) and 1098–1134 (ATAP…ASKP). Over residues 650–661 (APKRPAAAREDE) the composition is skewed to basic and acidic residues. The span at 662 to 675 (ERPEEEGEDEDERE) shows a compositional bias: acidic residues. Over residues 676–691 (EGGGEREPEGARETAG) the composition is skewed to basic and acidic residues.

Belongs to the DNA polymerase type-B family. Forms a complex with the ssDNA-binding protein UL29, the DNA polymerase processivity factor, and the alkaline exonuclease. Interacts with the putative helicase-primase complex subunit UL8; this interaction may coordinate leading and lagging strand DNA synthesis at the replication fork.

The protein localises to the host nucleus. The enzyme catalyses DNA(n) + a 2'-deoxyribonucleoside 5'-triphosphate = DNA(n+1) + diphosphate. The catalysed reaction is Endonucleolytic cleavage to 5'-phosphomonoester.. Its function is as follows. Replicates viral genomic DNA. The replication complex is composed of six viral proteins: the DNA polymerase, processivity factor, primase, primase-associated factor, helicase, and ssDNA-binding protein. Additionally, the polymerase contains an intrinsic ribonuclease H (RNase H) activity that specifically degrades RNA/DNA heteroduplexes or duplex DNA substrates in the 5' to 3' direction. Therefore, it can catalyze the excision of the RNA primers that initiate the synthesis of Okazaki fragments at a replication fork during viral DNA replication. The protein is DNA polymerase catalytic subunit of Human herpesvirus 1 (strain Angelotti) (HHV-1).